A 580-amino-acid chain; its full sequence is (3S,6E)-nerolidol synthase 1, chloroplastic (580 aa).

A chloroplast-targeting transit peptide spans methionine 1–glutamine 31. Positions 334, 338, 478, 482, and 486 each coordinate Mg(2+). Residues aspartate 334–aspartate 338 carry the DDXXD motif motif.

The protein belongs to the terpene synthase family. Tpsg subfamily. The cofactor is Mg(2+). Mn(2+) is required as a cofactor.

Its subcellular location is the plastid. It localises to the chloroplast. The catalysed reaction is (2E,6E)-farnesyl diphosphate + H2O = (3S,6E)-nerolidol + diphosphate. The protein operates within secondary metabolite biosynthesis; terpenoid biosynthesis. Functionally, involved in monoterpene (C10) and sesquiterpene (C15) biosynthesis. Converts geranyl diphosphate (GPP) into S-linalool and farnesyl diphosphate (FPP) into (3S)-E-nerolidol. Probably not expressed in wild strawberry species. In Fragaria vesca (Woodland strawberry), this protein is (3S,6E)-nerolidol synthase 1, chloroplastic.